The primary structure comprises 34 residues: MSDIN-like toxin proprotein 4 (34 aa).

The propeptide occupies 1 to 10; sequence MSDINTARLP. A cross-link (cyclopeptide (Leu-Pro)) is located at residues 11 to 20; that stretch reads LFLPPVRMPP. Positions 21–34 are excised as a propeptide; it reads CVGDDIEMVLTRGE.

It belongs to the MSDIN fungal toxin family. Processed by the macrocyclase-peptidase enzyme POPB to yield a toxic cyclic decapeptide. POPB first removes 10 residues from the N-terminus. Conformational trapping of the remaining peptide forces the enzyme to release this intermediate rather than proceed to macrocyclization. The enzyme rebinds the remaining peptide in a different conformation and catalyzes macrocyclization of the N-terminal 10 residues.

In terms of biological role, probable toxin that belongs to the MSDIN-like toxin family responsible for a large number of food poisoning cases and deaths. In Amanita bisporigera (Destroying angel), this protein is MSDIN-like toxin proprotein 4.